The following is a 130-amino-acid chain: MAQVQYYGTGRRKSSVARVRLVPGEGRVIINGRDFENYIPFAALREVVKQPLVATETLGNYDVLVNVNGGGYTGQAGAIRHGISRALLKADPEYRLTLKRAGLLTRDARMKERKKYGLKGARRAPQFSKR.

The protein belongs to the universal ribosomal protein uS9 family.

This Bacillus thuringiensis subsp. konkukian (strain 97-27) protein is Small ribosomal subunit protein uS9.